A 256-amino-acid chain; its full sequence is uncharacterized protein (256 aa).

The signal sequence occupies residues 1–22 (MGYLKRFALYISVMILIFAIAG). Cysteine 23 carries N-palmitoyl cysteine lipidation. Residue cysteine 23 is the site of S-diacylglycerol cysteine attachment.

The protein belongs to the staphylococcal tandem lipoprotein family.

The protein localises to the cell membrane. This is an uncharacterized protein from Staphylococcus aureus (strain COL).